The primary structure comprises 304 residues: Glycine--tRNA ligase alpha subunit (304 aa).

The protein belongs to the class-II aminoacyl-tRNA synthetase family. Tetramer of two alpha and two beta subunits.

Its subcellular location is the cytoplasm. It carries out the reaction tRNA(Gly) + glycine + ATP = glycyl-tRNA(Gly) + AMP + diphosphate. The protein is Glycine--tRNA ligase alpha subunit of Serratia proteamaculans (strain 568).